A 497-amino-acid chain; its full sequence is MTSTPDSRSVLTVIILGASGDLAKKKTYPALFGLYLRDLLPSNTIIYGYARSHIEIGDFKARISKGLKGDEEKKKQFLNLLHYHSGKYDEKASYDEFEKLILAEEKKQQGVDKFNRLFYMAIPPSIFIEVSIGIHGSLISKNGWSRVIVEKPFGRDLASSRELVSELGKLFKEKDLFRIDHYLGKEMVQNLMVLRFANAVFEPLWSKSHISSITITFKEDIGTEGRGGYFDQFGIIRDVMQNHLLQVLSLVAMEPPVSLNADDITNEKVKLLRCIQPIKMSEVVLGQYTSDPEGKIPAYLDDEGVPKDSTTPTYAAAVFHINNPRWRGMPFILKCGKALDERKTEVRIQFKRPDNFLFSDDDISRNELVMRIQPGEAVYLKLLSKKPGLENKIEQTELDLSYRHRFENLDLPDAYERLILDSIKGDHNLFVRDDELDVAWQIFTPLLDQIEKEKIKPEPYSFGSRGPKSADELSKKFGFIRSLGYNWPGNSPQGSKK.

NADP(+)-binding positions include Gly17–Lys24, Arg51, and Lys151. D-glucose 6-phosphate-binding positions include Lys151, His181–Lys185, Glu219, and Asp238. His243 serves as the catalytic Proton acceptor. Lys334 lines the NADP(+) pocket. Lys337 and Arg342 together coordinate D-glucose 6-phosphate. 3 residues coordinate NADP(+): Lys343, Arg347, and Arg371. Gln373 contributes to the D-glucose 6-phosphate binding site. Residues Tyr379 to Lys381, Asp399 to Ser401, Arg465, and Trp487 each bind NADP(+).

This sequence belongs to the glucose-6-phosphate dehydrogenase family.

It is found in the cytoplasm. The protein localises to the cytosol. It catalyses the reaction D-glucose 6-phosphate + NADP(+) = 6-phospho-D-glucono-1,5-lactone + NADPH + H(+). Its pathway is carbohydrate degradation; pentose phosphate pathway; D-ribulose 5-phosphate from D-glucose 6-phosphate (oxidative stage): step 1/3. Functionally, cytosolic glucose-6-phosphate dehydrogenase that catalyzes the first and rate-limiting step of the oxidative branch within the pentose phosphate pathway/shunt, an alternative route to glycolysis for the dissimilation of carbohydrates and a major source of reducing power and metabolic intermediates for fatty acid and nucleic acid biosynthetic processes. The chain is Glucose-6-phosphate 1-dehydrogenase (g6pd-1) from Dictyostelium discoideum (Social amoeba).